We begin with the raw amino-acid sequence, 505 residues long: Maturase K (505 aa).

This sequence belongs to the intron maturase 2 family. MatK subfamily.

The protein localises to the plastid. It localises to the chloroplast. Functionally, usually encoded in the trnK tRNA gene intron. Probably assists in splicing its own and other chloroplast group II introns. The polypeptide is Maturase K (Blitum bonus-henricus (Good King Henry)).